The primary structure comprises 359 residues: Cytochrome c oxidase subunit 2 (359 aa).

The signal sequence occupies residues 1 to 28 (MEQQNKRGLKRKALLGGVLGSGGLAMAG). Cys29 carries the N-palmitoyl cysteine lipid modification. Cys29 is lipidated: S-diacylglycerol cysteine. Helical transmembrane passes span 64 to 84 (VWVA…TAIF) and 107 to 127 (VPLE…LFFF). Cu cation-binding residues include His244, Cys285, Glu287, Cys289, His293, and Met296. The disordered stretch occupies residues 338–359 (STAPFVSDRTGTRDGENFQTPA).

It belongs to the cytochrome c oxidase subunit 2 family. In terms of assembly, associates with subunits I, III and IV to form cytochrome c oxidase. Binuclear copper center (CuA) serves as cofactor.

The protein localises to the cell membrane. The catalysed reaction is 4 Fe(II)-[cytochrome c] + O2 + 8 H(+)(in) = 4 Fe(III)-[cytochrome c] + 2 H2O + 4 H(+)(out). Its function is as follows. Subunits I and II form the functional core of the enzyme complex. Electrons originating in cytochrome c are transferred via heme a and Cu(A) to the binuclear center formed by heme a3 and Cu(B). The protein is Cytochrome c oxidase subunit 2 (ctaC) of Corynebacterium efficiens (strain DSM 44549 / YS-314 / AJ 12310 / JCM 11189 / NBRC 100395).